Reading from the N-terminus, the 70-residue chain is Peptide Hp1035 (70 aa).

Residues 1–23 form the signal peptide; the sequence is MKTQFVILLVALVLFQMFAQSEA. A Phenylalanine amide modification is found at Phe36. A propeptide spanning residues 40–70 is cleaved from the precursor; that stretch reads GLQDLDMDDLDQLFDGEISQADINFLNQLMR.

The protein belongs to the non-disulfide-bridged peptide (NDBP) superfamily. Short antimicrobial peptide (group 4) family. As to expression, expressed by the venom gland.

It is found in the secreted. The protein localises to the target cell membrane. Functionally, amphipathic peptide with antimicrobial activity. This is Peptide Hp1035 from Heterometrus petersii (Asian forest scorpion).